A 523-amino-acid chain; its full sequence is MASYNLRSQVRLIAITIVIIITLSTPITTNTSPQPWNILSHNEFAGKLTSSSSSVESAATDFGHVTKIFPSAVLIPSSVEDITDLIKLSFDSQLSFPLAARGHGHSHRGQASAKDGVVVNMRSMVNRDRGIKVSRTCLYVDVDAAWLWIEVLNKTLELGLTPVSWTDYLYLTVGGTLSNGGISGQTFRYGPQITNVLEMDVITGKGEIATCSKDMNSDLFFAVLGGLGQFGIITRARIKLEVAPKRAKWLRFLYIDFSEFTRDQERVISKTDGVDFLEGSIMVDHGPPDNWRSTYYPPSDHLRIASMVKRHRVIYCLEVVKYYDETSQYTVNEEMEELSDSLNHVRGFMYEKDVTYMDFLNRVRTGELNLKSKGQWDVPHPWLNLFVPKTQISKFDDGVFKGIILRNNITSGPVLVYPMNRNKWNDRMSAAIPEEDVFYAVGFLRSAGFDNWEAFDQENMEILKFCEDANMGVIQYLPYHSSQEGWVRHFGPRWNIFVERKYKYDPKMILSPGQNIFQKINSS.

An N-terminal signal peptide occupies residues 1-31 (MASYNLRSQVRLIAITIVIIITLSTPITTNT). Residues 66–243 (TKIFPSAVLI…TRARIKLEVA (178 aa)) form the FAD-binding PCMH-type domain. FAD is bound by residues alanine 100, glycine 102, and glycine 104. Histidine 105 is subject to Pros-8alpha-FAD histidine. Positions 106 and 110 each coordinate FAD. A glycan (N-linked (GlcNAc...) asparagine) is linked at asparagine 153. FAD contacts are provided by aspartate 167, threonine 172, serine 178, isoleucine 182, and isoleucine 233. N-linked (GlcNAc...) asparagine glycosylation is present at asparagine 408. Residues tyrosine 476, serine 511, and glutamine 514 each contribute to the FAD site.

Belongs to the oxygen-dependent FAD-linked oxidoreductase family. FAD is required as a cofactor. In terms of tissue distribution, very weak expression in the young shoot tissues around two weeks after germination. Present in the center of the floral meristem and the boundary between long stamen primordia and gynoecial primordia.

Its subcellular location is the endoplasmic reticulum. The protein localises to the vacuole. The catalysed reaction is N(6)-dimethylallyladenine + A + H2O = 3-methyl-2-butenal + adenine + AH2. In terms of biological role, catalyzes the oxidation of cytokinins, a family of N(6)-substituted adenine derivatives that are plant hormones, where the substituent is an isopentenyl group. Catalyzes in vitro the oxidation of various types of cytokinin nucleotides that are known as direct products of cytokinin biosynthesis. In association with CKX5 regulates the activity of the reproductive meristems, flower organ size and ovule formation. In Arabidopsis thaliana (Mouse-ear cress), this protein is Cytokinin dehydrogenase 3 (CKX3).